A 108-amino-acid polypeptide reads, in one-letter code: Urease subunit beta (108 aa).

The protein belongs to the urease beta subunit family. Heterotrimer of UreA (gamma), UreB (beta) and UreC (alpha) subunits. Three heterotrimers associate to form the active enzyme.

The protein localises to the cytoplasm. The catalysed reaction is urea + 2 H2O + H(+) = hydrogencarbonate + 2 NH4(+). It functions in the pathway nitrogen metabolism; urea degradation; CO(2) and NH(3) from urea (urease route): step 1/1. In Microcystis aeruginosa (strain NIES-843 / IAM M-2473), this protein is Urease subunit beta.